Here is a 345-residue protein sequence, read N- to C-terminus: N-acetyl-gamma-glutamyl-phosphate reductase (345 aa).

C149 is an active-site residue.

It belongs to the NAGSA dehydrogenase family. Type 1 subfamily.

It localises to the cytoplasm. The catalysed reaction is N-acetyl-L-glutamate 5-semialdehyde + phosphate + NADP(+) = N-acetyl-L-glutamyl 5-phosphate + NADPH + H(+). The protein operates within amino-acid biosynthesis; L-arginine biosynthesis; N(2)-acetyl-L-ornithine from L-glutamate: step 3/4. In terms of biological role, catalyzes the NADPH-dependent reduction of N-acetyl-5-glutamyl phosphate to yield N-acetyl-L-glutamate 5-semialdehyde. The sequence is that of N-acetyl-gamma-glutamyl-phosphate reductase from Janthinobacterium sp. (strain Marseille) (Minibacterium massiliensis).